The sequence spans 161 residues: Large ribosomal subunit protein uL11 (161 aa).

It belongs to the universal ribosomal protein uL11 family. In terms of assembly, part of the ribosomal stalk of the 50S ribosomal subunit. Interacts with L10 and the large rRNA to form the base of the stalk. L10 forms an elongated spine to which L12 dimers bind in a sequential fashion forming a multimeric L10(L12)X complex.

In terms of biological role, forms part of the ribosomal stalk which helps the ribosome interact with GTP-bound translation factors. The polypeptide is Large ribosomal subunit protein uL11 (Methanosarcina acetivorans (strain ATCC 35395 / DSM 2834 / JCM 12185 / C2A)).